The primary structure comprises 1450 residues: ABC transporter G family member 37 (1450 aa).

Residues 175–447 form the ABC transporter 1 domain; sequence VKLTGAKTHE…FEDCGFRCPE (273 aa). 207–214 provides a ligand contact to ATP; the sequence is GPPSCGKT. The ABC transmembrane type-2 1 domain maps to 525 to 737; it reads ELFIACISRE…GEIGLSVNEF (213 aa). Transmembrane regions (helical) follow at residues 544-564, 581-601, 615-635, 661-681, 687-707, and 773-793; these read VYIF…TVFI, ALFF…SMTA, FYPA…LSFF, FILL…LAAI, ASIT…GFVI, and LCAL…ALTF. Residues 810-838 form a disordered region; that stretch reads SELQGTEKSTEDSSVRKKTTDSPVKTEEE. Positions 817–838 are enriched in basic and acidic residues; that stretch reads KSTEDSSVRKKTTDSPVKTEEE. Positions 850–1103 constitute an ABC transporter 2 domain; it reads VTFQDLNYFV…IIEYFESVPE (254 aa). Residue 895–902 participates in ATP binding; it reads GVSGAGKT. The ABC transmembrane type-2 2 domain maps to 1175–1389; sequence GQFKSILWKM…TLNGFISSQY (215 aa). 7 helical membrane passes run 1194–1214, 1226–1246, 1282–1302, 1313–1333, 1339–1359, 1365–1385, and 1422–1442; these read YNLM…ALFW, MFTV…NNCA, IPYI…MIGF, LYSM…LVSI, VAAI…GFLI, PGWW…NGFI, and VTAV…AFFV.

This sequence belongs to the ABC transporter superfamily. ABCG family. PDR (TC 3.A.1.205) subfamily. In terms of tissue distribution, expressed in roots and, to a lower extent, in seedlings.

The protein localises to the cell membrane. Its function is as follows. Together with ABCG36, regulates auxin homeostasis and responses by playing a dual role in coumarin (and derivatives) and in the auxin precursor indole 3-butyric acid (IBA) efflux transport, thus influencing roots and root hairs development. Mediates coumarin exudation in the rhizosphere, especially in iron (Fe) deficient conditions, with a strong specificity for highly oxygenated compounds such as scopoletin and derivatives, dihydroxyscopoletin, esculetin, fraxin, fraxetin and esculin; these molecules improve plant Fe nutrition. Involved in the cellular detoxification of xenobiotics by promoting the excretion of some auxinic herbicides including 2,4-dichlorophenoxyacetic acid (2,4-D), 4-(2,4-dichlorophenoxy)butyric acid (2,4-DB) and other members of the phenoxyalkanoic acid family as well as the polar auxin transport inhibitor, napthylphthalamic acid (NPA). May be a general defense protein. The sequence is that of ABC transporter G family member 37 from Arabidopsis thaliana (Mouse-ear cress).